Consider the following 381-residue polypeptide: Cytochrome b (381 aa).

Helical transmembrane passes span Phe34–Met54, Trp78–Ile99, Trp114–Leu134, and Phe179–Leu199. Residues His84 and His98 each contribute to the heme b site. The heme b site is built by His183 and His197. An a ubiquinone-binding site is contributed by His202. The next 4 helical transmembrane spans lie at Tyr227–Met247, Leu289–His309, Met321–Gly341, and Phe348–Pro368.

The protein belongs to the cytochrome b family. As to quaternary structure, the cytochrome bc1 complex contains 3 respiratory subunits (MT-CYB, CYC1 and UQCRFS1), 2 core proteins (UQCRC1 and UQCRC2) and probably 6 low-molecular weight proteins. It depends on heme b as a cofactor.

It localises to the mitochondrion inner membrane. Its function is as follows. Component of the ubiquinol-cytochrome c reductase complex (complex III or cytochrome b-c1 complex) that is part of the mitochondrial respiratory chain. The b-c1 complex mediates electron transfer from ubiquinol to cytochrome c. Contributes to the generation of a proton gradient across the mitochondrial membrane that is then used for ATP synthesis. In Prionace glauca (Blue shark), this protein is Cytochrome b (mt-cyb).